Consider the following 225-residue polypeptide: ATP-dependent dethiobiotin synthetase BioD (225 aa).

Position 15–20 (15–20 (EIGKTF)) interacts with ATP. Mg(2+) is bound at residue Thr-19. Residue Lys-40 is part of the active site. ATP is bound by residues Asp-57, 118 to 121 (EGVG), 178 to 179 (NR), and 207 to 209 (PHV). Mg(2+) contacts are provided by Asp-57 and Glu-118.

The protein belongs to the dethiobiotin synthetase family. Homodimer. It depends on Mg(2+) as a cofactor.

The protein localises to the cytoplasm. It carries out the reaction (7R,8S)-7,8-diammoniononanoate + CO2 + ATP = (4R,5S)-dethiobiotin + ADP + phosphate + 3 H(+). It participates in cofactor biosynthesis; biotin biosynthesis; biotin from 7,8-diaminononanoate: step 1/2. In terms of biological role, catalyzes a mechanistically unusual reaction, the ATP-dependent insertion of CO2 between the N7 and N8 nitrogen atoms of 7,8-diaminopelargonic acid (DAPA, also called 7,8-diammoniononanoate) to form a ureido ring. The protein is ATP-dependent dethiobiotin synthetase BioD of Aromatoleum aromaticum (strain DSM 19018 / LMG 30748 / EbN1) (Azoarcus sp. (strain EbN1)).